The primary structure comprises 288 residues: Energy-coupling factor transporter ATP-binding protein EcfA2 (288 aa).

In terms of domain architecture, ABC transporter spans 2 to 244; the sequence is IKFEKVNYTY…VDFLKAHELG (243 aa). 39–46 lines the ATP pocket; that stretch reads GHTGSGKS. The active-site Proton acceptor is the glutamate 170.

Belongs to the ABC transporter superfamily. Energy-coupling factor EcfA family. In terms of assembly, forms a stable energy-coupling factor (ECF) transporter complex composed of 2 membrane-embedded substrate-binding proteins (S component), 2 ATP-binding proteins (A component) and 2 transmembrane proteins (T component). In L.lactis forms a stable complex with EcfA' and EcfT and substrate-binding components. In E.coli forms a stable complex with EcfA, EcfT and individually with 3 tested substrate-binding components (BioY, NiaX and ThiT) with a stoichiometry of 1.1:1:1. The core ECF complex interacts with a number of substrate-specific binding components, including BioY, BioY2, HmpT, NiaX, PanT, QueT, RibU and ThiT.

The protein localises to the cell membrane. Its function is as follows. ATP-binding (A) component of a common energy-coupling factor (ECF) ABC-transporter complex. Unlike classic ABC transporters this ECF transporter provides the energy necessary to transport a number of different substrates. In this organism these probably include biotin, thiamine precursor, niacin, pantothenic acid, queuosine precursor, riboflavin and thiamine. Uptake of niacin or riboflavin into proteosomes containing EcfA1A2T and Niax or RibU has been demonstrated. Uptake requires hydrolyzable Mg-ATP and is substrate-specific; NiaX-containing proteosomes did not transport riboflavin. This is Energy-coupling factor transporter ATP-binding protein EcfA2 from Lactococcus lactis subsp. cremoris (strain MG1363).